The primary structure comprises 244 residues: ATP-dependent dethiobiotin synthetase BioD 1 (244 aa).

12–17 (NVGKTV) contributes to the ATP binding site. Position 16 (T16) interacts with Mg(2+). K37 is an active-site residue. An ATP-binding site is contributed by D68. Residues D68 and E126 each coordinate Mg(2+). ATP is bound by residues 186-187 (NR), 215-217 (PYL), and E222.

It belongs to the dethiobiotin synthetase family. As to quaternary structure, homodimer. It depends on Mg(2+) as a cofactor.

It is found in the cytoplasm. It carries out the reaction (7R,8S)-7,8-diammoniononanoate + CO2 + ATP = (4R,5S)-dethiobiotin + ADP + phosphate + 3 H(+). It functions in the pathway cofactor biosynthesis; biotin biosynthesis; biotin from 7,8-diaminononanoate: step 1/2. Its function is as follows. Catalyzes a mechanistically unusual reaction, the ATP-dependent insertion of CO2 between the N7 and N8 nitrogen atoms of 7,8-diaminopelargonic acid (DAPA, also called 7,8-diammoniononanoate) to form a ureido ring. This chain is ATP-dependent dethiobiotin synthetase BioD 1, found in Pasteurella multocida (strain Pm70).